Consider the following 510-residue polypeptide: NAD(P)H-quinone oxidoreductase subunit 2, chloroplastic (510 aa).

12 consecutive transmembrane segments (helical) span residues 24–44 (LLLF…GLIL), 59–79 (WFYF…LFRW), 99–119 (IFQF…VEYI), 124–144 (MAIT…MFLC), 149–169 (LITI…LSGY), 183–203 (YLLM…WLYG), 229–249 (ISIA…PAPF), 295–315 (WHLL…LIAI), 323–343 (MLAY…IVGD), 347–367 (GYAS…GTFA), 395–415 (ALSS…AGFF), and 418–438 (LHLF…IGLL).

Belongs to the complex I subunit 2 family. In terms of assembly, NDH is composed of at least 16 different subunits, 5 of which are encoded in the nucleus.

It localises to the plastid. The protein localises to the chloroplast thylakoid membrane. The catalysed reaction is a plastoquinone + NADH + (n+1) H(+)(in) = a plastoquinol + NAD(+) + n H(+)(out). It catalyses the reaction a plastoquinone + NADPH + (n+1) H(+)(in) = a plastoquinol + NADP(+) + n H(+)(out). NDH shuttles electrons from NAD(P)H:plastoquinone, via FMN and iron-sulfur (Fe-S) centers, to quinones in the photosynthetic chain and possibly in a chloroplast respiratory chain. The immediate electron acceptor for the enzyme in this species is believed to be plastoquinone. Couples the redox reaction to proton translocation, and thus conserves the redox energy in a proton gradient. The polypeptide is NAD(P)H-quinone oxidoreductase subunit 2, chloroplastic (Allium textile (Textile onion)).